We begin with the raw amino-acid sequence, 66 residues long: DNA-directed RNA polymerase subunit Rpo10 (66 aa).

Zn(2+) contacts are provided by Cys-7, Cys-10, Cys-44, and Cys-45.

It belongs to the archaeal Rpo10/eukaryotic RPB10 RNA polymerase subunit family. As to quaternary structure, part of the RNA polymerase complex. Requires Zn(2+) as cofactor.

It localises to the cytoplasm. It carries out the reaction RNA(n) + a ribonucleoside 5'-triphosphate = RNA(n+1) + diphosphate. Functionally, DNA-dependent RNA polymerase (RNAP) catalyzes the transcription of DNA into RNA using the four ribonucleoside triphosphates as substrates. The polypeptide is DNA-directed RNA polymerase subunit Rpo10 (Staphylothermus marinus (strain ATCC 43588 / DSM 3639 / JCM 9404 / F1)).